We begin with the raw amino-acid sequence, 111 residues long: Secreted RxLR effector protein 159 (111 aa).

Residues 1–21 form the signal peptide; sequence MRGAYYVAIAFLVAASSRTAA. The RxLR-dEER motif lies at 50 to 71; it reads RVLRGSRDLKDKLAVYANDEQR. Residue asparagine 81 is glycosylated (N-linked (GlcNAc...) asparagine).

It belongs to the RxLR effector family.

The protein localises to the secreted. It is found in the host nucleus. Its subcellular location is the host cytoplasm. In terms of biological role, secreted effector that completely suppresses the host cell death induced by cell death-inducing proteins. This chain is Secreted RxLR effector protein 159, found in Plasmopara viticola (Downy mildew of grapevine).